A 519-amino-acid polypeptide reads, in one-letter code: 2-isopropylmalate synthase (519 aa).

Residues 5–267 (VKIFDTTLRD…NTNIRSHEIS (263 aa)) enclose the Pyruvate carboxyltransferase domain. 4 residues coordinate Mn(2+): Asp14, His202, His204, and Asn238. The segment at 392–519 (KLLYLQASSG…KKQQTQTAGV (128 aa)) is regulatory domain.

It belongs to the alpha-IPM synthase/homocitrate synthase family. LeuA type 1 subfamily. Homodimer. Requires Mn(2+) as cofactor.

The protein resides in the cytoplasm. It carries out the reaction 3-methyl-2-oxobutanoate + acetyl-CoA + H2O = (2S)-2-isopropylmalate + CoA + H(+). Its pathway is amino-acid biosynthesis; L-leucine biosynthesis; L-leucine from 3-methyl-2-oxobutanoate: step 1/4. Functionally, catalyzes the condensation of the acetyl group of acetyl-CoA with 3-methyl-2-oxobutanoate (2-ketoisovalerate) to form 3-carboxy-3-hydroxy-4-methylpentanoate (2-isopropylmalate). This Pseudoalteromonas atlantica (strain T6c / ATCC BAA-1087) protein is 2-isopropylmalate synthase.